Consider the following 195-residue polypeptide: ATP-dependent Clp protease proteolytic subunit (195 aa).

Serine 101 functions as the Nucleophile in the catalytic mechanism. Histidine 126 is an active-site residue.

It belongs to the peptidase S14 family. Component of the chloroplastic Clp protease core complex.

Its subcellular location is the plastid. The protein localises to the chloroplast stroma. The catalysed reaction is Hydrolysis of proteins to small peptides in the presence of ATP and magnesium. alpha-casein is the usual test substrate. In the absence of ATP, only oligopeptides shorter than five residues are hydrolyzed (such as succinyl-Leu-Tyr-|-NHMec, and Leu-Tyr-Leu-|-Tyr-Trp, in which cleavage of the -Tyr-|-Leu- and -Tyr-|-Trp bonds also occurs).. Its function is as follows. Cleaves peptides in various proteins in a process that requires ATP hydrolysis. Has a chymotrypsin-like activity. Plays a major role in the degradation of misfolded proteins. This is ATP-dependent Clp protease proteolytic subunit from Oltmannsiellopsis viridis (Marine flagellate).